Reading from the N-terminus, the 205-residue chain is Small ribosomal subunit protein uS4 (205 aa).

Residues S94 to I157 enclose the S4 RNA-binding domain.

Belongs to the universal ribosomal protein uS4 family. As to quaternary structure, part of the 30S ribosomal subunit. Contacts protein S5. The interaction surface between S4 and S5 is involved in control of translational fidelity.

Functionally, one of the primary rRNA binding proteins, it binds directly to 16S rRNA where it nucleates assembly of the body of the 30S subunit. Its function is as follows. With S5 and S12 plays an important role in translational accuracy. In Rickettsia canadensis (strain McKiel), this protein is Small ribosomal subunit protein uS4.